The primary structure comprises 345 residues: Splicing factor YJU2 (345 aa).

The Zn(2+) site is built by Cys43, Cys46, Cys80, and Cys83. The segment at 205–345 (KRLRDSDSEE…YSDSDDSSSD (141 aa)) is disordered. Residues 217-232 (ENAKERSKKHIADKPT) are compositionally biased toward basic and acidic residues. Composition is skewed to low complexity over residues 308-317 (SSITSSSASS) and 327-337 (GSSLGLLGAYS).

It belongs to the CWC16 family. YJU2 subfamily. As to quaternary structure, component of the spliceosome. Present in the activated B complex, the catalytically activated B* complex which catalyzes the branching, the catalytic step 1 C complex catalyzing the exon ligation, and the postcatalytic P complex containing the ligated exons (mRNA) and the excised lariat intron.

It is found in the nucleus. Part of the spliceosome which catalyzes two sequential transesterification reactions, first the excision of the non-coding intron from pre-mRNA and then the ligation of the coding exons to form the mature mRNA. Plays a role in stabilizing the structure of the spliceosome catalytic core and docking of the branch helix into the active site, producing 5'-exon and lariat intron-3'-intermediates. May protect cells from TP53-dependent apoptosis upon dsDNA break damage through association with PRP19-CD5L complex. The protein is Splicing factor YJU2 of Danio rerio (Zebrafish).